The following is a 494-amino-acid chain: GDP-fucose protein O-fucosyltransferase 4 (494 aa).

Residues 1–7 (MAARYTE) are Cytoplasmic-facing. The chain crosses the membrane as a helical; Signal-anchor for type II membrane protein span at residues 8–24 (AVLAALGVLSVCSASSS). Over 25 to 494 (SGSGASGKAG…EIFMKRNKNL (470 aa)) the chain is Lumenal. N167 carries an N-linked (GlcNAc...) asparagine glycan. C390 and C393 are oxidised to a cystine.

Belongs to the glycosyltransferase 10 family.

Its subcellular location is the endoplasmic reticulum membrane. The enzyme catalyses L-threonyl-[protein] + GDP-beta-L-fucose = 3-O-(alpha-L-fucosyl)-L-threonyl-[protein] + GDP + H(+). It carries out the reaction L-seryl-[protein] + GDP-beta-L-fucose = 3-O-(alpha-L-fucosyl)-L-seryl-[protein] + GDP + H(+). The protein operates within protein modification; protein glycosylation. Protein O-fucosyltransferase that specifically catalyzes O-fucosylation of serine or threonine residues in EMI domains of target proteins, such as MMRN1, MMRN2 and EMID1. Attaches fucose through an O-glycosidic linkage. O-fucosylation of EMI domain-containing proteins may be required for facilitating protein folding and secretion. Also shows minor alpha-(1,3)-fucosyltransferase activity toward activity toward biantennary N-glycan acceptors. However, this was tested with a library of synthetic substrates and this activity is unsure in vivo. The chain is GDP-fucose protein O-fucosyltransferase 4 (Fut11) from Rattus norvegicus (Rat).